Here is a 78-residue protein sequence, read N- to C-terminus: U5-ctenitoxin-Pk1a (78 aa).

Cystine bridges form between C6-C23, C13-C29, C20-C52, C22-C40, C31-C38, C58-C73, and C69-C77.

In terms of tissue distribution, expressed by the venom gland.

It is found in the secreted. Lethal neurotoxin. Causes spastic paralysis and death in mice in 4-6 minutes after intracerebroventricular injection at dose levels of 1.5 ug per mouse. The polypeptide is U5-ctenitoxin-Pk1a (Phoneutria keyserlingi (Brazilian wandering spider)).